The sequence spans 361 residues: tRNA/tmRNA (uracil-C(5))-methyltransferase (361 aa).

Residues Q183, Y211, N216, E232, and D294 each contribute to the S-adenosyl-L-methionine site. C319 serves as the catalytic Nucleophile. Residue E353 is the Proton acceptor of the active site.

The protein belongs to the class I-like SAM-binding methyltransferase superfamily. RNA M5U methyltransferase family. TrmA subfamily.

It carries out the reaction uridine(54) in tRNA + S-adenosyl-L-methionine = 5-methyluridine(54) in tRNA + S-adenosyl-L-homocysteine + H(+). The enzyme catalyses uridine(341) in tmRNA + S-adenosyl-L-methionine = 5-methyluridine(341) in tmRNA + S-adenosyl-L-homocysteine + H(+). Dual-specificity methyltransferase that catalyzes the formation of 5-methyluridine at position 54 (m5U54) in all tRNAs, and that of position 341 (m5U341) in tmRNA (transfer-mRNA). This is tRNA/tmRNA (uracil-C(5))-methyltransferase from Acinetobacter baumannii (strain ACICU).